The chain runs to 87 residues: Antitoxin YefM (87 aa).

Belongs to the phD/YefM antitoxin family. As to quaternary structure, forms a complex with YoeB which inhibits its toxin activity.

In terms of biological role, antitoxin component of a type II toxin-antitoxin (TA) system. A probable antitoxin for the putative mRNA interferase YeoB. In Streptomyces coelicolor (strain ATCC BAA-471 / A3(2) / M145), this protein is Antitoxin YefM.